Reading from the N-terminus, the 382-residue chain is Chaperone protein DnaJ 1 (382 aa).

Positions 4-68 (DYYGILGVDR…DKRRIVDMGG (65 aa)) constitute a J domain. A CR-type zinc finger spans residues 134–216 (GAKKDLTLDT…CAGDGRVRAR (83 aa)). C147, C150, C164, C167, C190, C193, C204, and C207 together coordinate Zn(2+). CXXCXGXG motif repeat units follow at residues 147 to 154 (CTKCHGSG), 164 to 171 (CGTCNGAG), 190 to 197 (CHTCDGTG), and 204 to 211 (CTECAGDG).

This sequence belongs to the DnaJ family. In terms of assembly, homodimer. Zn(2+) is required as a cofactor.

It localises to the cytoplasm. Functionally, participates actively in the response to hyperosmotic and heat shock by preventing the aggregation of stress-denatured proteins and by disaggregating proteins, also in an autonomous, DnaK-independent fashion. Unfolded proteins bind initially to DnaJ; upon interaction with the DnaJ-bound protein, DnaK hydrolyzes its bound ATP, resulting in the formation of a stable complex. GrpE releases ADP from DnaK; ATP binding to DnaK triggers the release of the substrate protein, thus completing the reaction cycle. Several rounds of ATP-dependent interactions between DnaJ, DnaK and GrpE are required for fully efficient folding. Also involved, together with DnaK and GrpE, in the DNA replication of plasmids through activation of initiation proteins. This Corynebacterium glutamicum (strain ATCC 13032 / DSM 20300 / JCM 1318 / BCRC 11384 / CCUG 27702 / LMG 3730 / NBRC 12168 / NCIMB 10025 / NRRL B-2784 / 534) protein is Chaperone protein DnaJ 1.